A 366-amino-acid chain; its full sequence is Uroporphyrinogen decarboxylase (366 aa).

Residues 28 to 32 (RQAGR), D78, Y160, T215, and H333 contribute to the substrate site.

This sequence belongs to the uroporphyrinogen decarboxylase family. Homodimer.

It localises to the cytoplasm. It catalyses the reaction uroporphyrinogen III + 4 H(+) = coproporphyrinogen III + 4 CO2. Its pathway is porphyrin-containing compound metabolism; protoporphyrin-IX biosynthesis; coproporphyrinogen-III from 5-aminolevulinate: step 4/4. Its function is as follows. Catalyzes the decarboxylation of four acetate groups of uroporphyrinogen-III to yield coproporphyrinogen-III. This is Uroporphyrinogen decarboxylase from Paraburkholderia xenovorans (strain LB400).